The chain runs to 392 residues: Glutamyl-tRNA reductase (392 aa).

Substrate-binding positions include 38–41 (TCNR), serine 86, 91–93 (EDQ), and glutamine 97. Cysteine 39 acts as the Nucleophile in catalysis. 165–170 (GAGEMA) is a binding site for NADP(+).

It belongs to the glutamyl-tRNA reductase family. As to quaternary structure, homodimer.

The enzyme catalyses (S)-4-amino-5-oxopentanoate + tRNA(Glu) + NADP(+) = L-glutamyl-tRNA(Glu) + NADPH + H(+). It functions in the pathway porphyrin-containing compound metabolism; protoporphyrin-IX biosynthesis; 5-aminolevulinate from L-glutamyl-tRNA(Glu): step 1/2. In terms of biological role, catalyzes the NADPH-dependent reduction of glutamyl-tRNA(Glu) to glutamate 1-semialdehyde (GSA). The chain is Glutamyl-tRNA reductase from Methanocaldococcus jannaschii (strain ATCC 43067 / DSM 2661 / JAL-1 / JCM 10045 / NBRC 100440) (Methanococcus jannaschii).